A 91-amino-acid polypeptide reads, in one-letter code: Small ribosomal subunit protein uS19 (91 aa).

The protein belongs to the universal ribosomal protein uS19 family.

Functionally, protein S19 forms a complex with S13 that binds strongly to the 16S ribosomal RNA. This is Small ribosomal subunit protein uS19 from Synechococcus sp. (strain CC9902).